A 122-amino-acid polypeptide reads, in one-letter code: Large ribosomal subunit protein eL18 (122 aa).

The protein belongs to the eukaryotic ribosomal protein eL18 family.

The chain is Large ribosomal subunit protein eL18 from Pyrobaculum aerophilum (strain ATCC 51768 / DSM 7523 / JCM 9630 / CIP 104966 / NBRC 100827 / IM2).